The primary structure comprises 362 residues: Snurportin-1 (362 aa).

An N-acetylmethionine modification is found at Met-1. Disordered regions lie at residues 1–40 (MEELSQALAGSFSVSQDLNSTAAPHPRLSQYKSKYSSLEQ) and 69–90 (DWTGMESEEEEEKKDDEEMDVD). A necessary for interaction with KPNB1 and m3G-cap U1 and U5 snRNP import receptor activity region spans residues 1-65 (MEELSQALAG…LDYVNHARRL (65 aa)). The segment at 1-160 (MEELSQALAG…NTFPSLLPGG (160 aa)) is necessary for interaction with XPO1. One can recognise an IBB domain in the interval 11–73 (SFSVSQDLNS…RLAEDDWTGM (63 aa)). Residues 12-22 (FSVSQDLNSTA) show a composition bias toward polar residues. The span at 69 to 89 (DWTGMESEEEEEKKDDEEMDV) shows a compositional bias: acidic residues. Ser-75 is subject to Phosphoserine. The tract at residues 128 to 130 (GKR) is interaction with m3G-cap structure. A necessary for binding to the m3G-cap structure region spans residues 210–330 (LHSKLPEEEG…GIMGKLTPRA (121 aa)). The segment at 319–362 (KEGIMGKLTPRASENGHYELEHLSTPKLKSPPQRPNHPESLMEN) is disordered. Over residues 332–342 (ENGHYELEHLS) the composition is skewed to basic and acidic residues.

The protein belongs to the snurportin family. As to quaternary structure, component of an import snRNP complex composed of KPNB1, SNUPN, SMN1 and ZNF259. Component of a nuclear export receptor complex composed of KPNB1, Ran, SNUPN and XPO1. Found in a trimeric export complex with SNUPN, Ran and XPO1. Interacts (via IBB domain) with KPNB1; the interaction is direct. Interacts with DDX20, IPO7, SMN1, SNRPB and XPO1. Interacts directly with XPO1. Its interaction with XPO1 and binding to m3G-cap U snRNPs appears to be mutually exclusive. Can form homomers.

The protein resides in the nucleus. It localises to the cytoplasm. In terms of biological role, functions as an U snRNP-specific nuclear import adapter. Involved in the trimethylguanosine (m3G)-cap-dependent nuclear import of U snRNPs. Binds specifically to the terminal m3G-cap U snRNAs. This chain is Snurportin-1 (SNUPN), found in Bos taurus (Bovine).